We begin with the raw amino-acid sequence, 492 residues long: Bifunctional purine biosynthesis protein PurH (492 aa).

The region spanning 1 to 144 (MKKAILSVSN…KNYKHVTTIV (144 aa)) is the MGS-like domain.

This sequence belongs to the PurH family.

The enzyme catalyses (6R)-10-formyltetrahydrofolate + 5-amino-1-(5-phospho-beta-D-ribosyl)imidazole-4-carboxamide = 5-formamido-1-(5-phospho-D-ribosyl)imidazole-4-carboxamide + (6S)-5,6,7,8-tetrahydrofolate. It catalyses the reaction IMP + H2O = 5-formamido-1-(5-phospho-D-ribosyl)imidazole-4-carboxamide. It functions in the pathway purine metabolism; IMP biosynthesis via de novo pathway; 5-formamido-1-(5-phospho-D-ribosyl)imidazole-4-carboxamide from 5-amino-1-(5-phospho-D-ribosyl)imidazole-4-carboxamide (10-formyl THF route): step 1/1. Its pathway is purine metabolism; IMP biosynthesis via de novo pathway; IMP from 5-formamido-1-(5-phospho-D-ribosyl)imidazole-4-carboxamide: step 1/1. This is Bifunctional purine biosynthesis protein PurH from Staphylococcus aureus (strain JH1).